A 914-amino-acid polypeptide reads, in one-letter code: Serine/threonine kinase SAD-1 (914 aa).

The region spanning 47–298 is the Protein kinase domain; that stretch reads YKLEKTLGKG…LADVFKHPWV (252 aa). ATP contacts are provided by residues 53–61 and Lys-76; that span reads LGKGQTGLV. Asp-169 functions as the Proton acceptor in the catalytic mechanism. 3 disordered regions span residues 375–551, 563–590, and 757–914; these read AQED…SPPS, TMNSTNSSTNSLIAGNSQTSIGSTSGPW, and NSTQ…ADKV. The segment covering 393-402 has biased composition (basic and acidic residues); sequence PPKKRTDSSR. Over residues 444 to 462 the composition is skewed to low complexity; sequence RSSTRDLFGSSSSGSYSAR. Residues 473–482 show a composition bias toward polar residues; sequence ASRSTNSYHY. The span at 495 to 526 shows a compositional bias: basic and acidic residues; that stretch reads AARHVRDAQERRESRDSGRGSSRKESKDRSDK. Composition is skewed to low complexity over residues 527–551 and 563–573; these read SASSSSCKNDASSTSSVPHKYSPPS and TMNSTNSSTNS. Residues 574–590 are compositionally biased toward polar residues; sequence LIAGNSQTSIGSTSGPW. Positions 780–796 are enriched in low complexity; that stretch reads DSSVGSACSDSESNASS. The segment covering 823–837 has biased composition (polar residues); the sequence is SMRSVGSGTANSYKS. Residues 850–876 show a composition bias toward low complexity; the sequence is ASSSSASNRYGPSSSSSGSYSNNADYS. The segment covering 882–903 has biased composition (polar residues); that stretch reads SQRSNGSSAPKNQYSPGSQRSF.

This sequence belongs to the protein kinase superfamily. CAMK Ser/Thr protein kinase family. SNF1 subfamily. In terms of assembly, interacts with strd-1 and nab-1. It depends on Mg(2+) as a cofactor. In terms of tissue distribution, expressed in neurons. Colocalizes with strd-1 along the dorsal nerve cord.

It is found in the synapse. The enzyme catalyses L-seryl-[protein] + ATP = O-phospho-L-seryl-[protein] + ADP + H(+). The catalysed reaction is L-threonyl-[protein] + ATP = O-phospho-L-threonyl-[protein] + ADP + H(+). Functionally, regulates both neuronal polarity and synaptic organization when bound to strd-1. Kinase activity is required for the establishment, but not the maintenance, of both processes. Binding to nab-1 is essential for role in restricting axonal fate during neuronal polarization but is not required for regulating synapse morphology. The polypeptide is Serine/threonine kinase SAD-1 (Caenorhabditis elegans).